Consider the following 491-residue polypeptide: Pentatricopeptide repeat-containing protein At5g27460 (491 aa).

10 PPR repeats span residues 69–99 (SLSE…MENQ), 105–139 (SVYD…SVSM), 142–176 (AKSA…GFLV), 177–211 (TPHP…KIPR), 212–246 (NVLS…KSVE), 248–278 (GWSS…AEKM), 283–313 (NRLG…SKSV), 318–348 (SCVN…WEAQ), 353–387 (DVRV…GGTP), and 388–426 (NYKT…HWRP).

This sequence belongs to the PPR family. P subfamily.

The polypeptide is Pentatricopeptide repeat-containing protein At5g27460 (Arabidopsis thaliana (Mouse-ear cress)).